A 190-amino-acid polypeptide reads, in one-letter code: Probable nicotinate-nucleotide adenylyltransferase (190 aa).

The protein belongs to the NadD family.

The enzyme catalyses nicotinate beta-D-ribonucleotide + ATP + H(+) = deamido-NAD(+) + diphosphate. It functions in the pathway cofactor biosynthesis; NAD(+) biosynthesis; deamido-NAD(+) from nicotinate D-ribonucleotide: step 1/1. Functionally, catalyzes the reversible adenylation of nicotinate mononucleotide (NaMN) to nicotinic acid adenine dinucleotide (NaAD). This is Probable nicotinate-nucleotide adenylyltransferase from Azobacteroides pseudotrichonymphae genomovar. CFP2.